A 248-amino-acid polypeptide reads, in one-letter code: 1-(5-phosphoribosyl)-5-[(5-phosphoribosylamino)methylideneamino] imidazole-4-carboxamide isomerase (248 aa).

The active-site Proton acceptor is D8. The Proton donor role is filled by D129.

The protein belongs to the HisA/HisF family.

The protein localises to the cytoplasm. The catalysed reaction is 1-(5-phospho-beta-D-ribosyl)-5-[(5-phospho-beta-D-ribosylamino)methylideneamino]imidazole-4-carboxamide = 5-[(5-phospho-1-deoxy-D-ribulos-1-ylimino)methylamino]-1-(5-phospho-beta-D-ribosyl)imidazole-4-carboxamide. It participates in amino-acid biosynthesis; L-histidine biosynthesis; L-histidine from 5-phospho-alpha-D-ribose 1-diphosphate: step 4/9. In Rhizobium etli (strain ATCC 51251 / DSM 11541 / JCM 21823 / NBRC 15573 / CFN 42), this protein is 1-(5-phosphoribosyl)-5-[(5-phosphoribosylamino)methylideneamino] imidazole-4-carboxamide isomerase.